The chain runs to 77 residues: Acyl carrier protein (77 aa).

The Carrier domain maps to 1 to 75 (MVFEKVKDII…DVVNYIKAHT (75 aa)). Serine 35 carries the post-translational modification O-(pantetheine 4'-phosphoryl)serine.

Belongs to the acyl carrier protein (ACP) family. In terms of processing, 4'-phosphopantetheine is transferred from CoA to a specific serine of apo-ACP by AcpS. This modification is essential for activity because fatty acids are bound in thioester linkage to the sulfhydryl of the prosthetic group.

It is found in the cytoplasm. The protein operates within lipid metabolism; fatty acid biosynthesis. Functionally, carrier of the growing fatty acid chain in fatty acid biosynthesis. The polypeptide is Acyl carrier protein (Clostridium acetobutylicum (strain ATCC 824 / DSM 792 / JCM 1419 / IAM 19013 / LMG 5710 / NBRC 13948 / NRRL B-527 / VKM B-1787 / 2291 / W)).